The chain runs to 472 residues: 2-oxoglutarate carboxylase small subunit (472 aa).

Positions 1–445 (MFKKVLVANR…TTRYLEEHPH (445 aa)) constitute a Biotin carboxylation domain. ATP contacts are provided by K115 and E199. The region spanning 119-316 (KEVMKRAGVP…IVKWQIRIAA (198 aa)) is the ATP-grasp domain. R291 is an active-site residue.

As to quaternary structure, heterohexadecamer of 8 large subunits and 8 small subunits. Requires Mg(2+) as cofactor. The cofactor is Mn(2+). Co(2+) serves as cofactor.

The catalysed reaction is hydrogencarbonate + 2-oxoglutarate + ATP = (S)-oxalosuccinate + ADP + phosphate + H(+). This is 2-oxoglutarate carboxylase small subunit from Hydrogenobacter thermophilus (strain DSM 6534 / IAM 12695 / TK-6).